The sequence spans 145 residues: D-aminoacyl-tRNA deacylase (145 aa).

Positions 137-138 (GP) match the Gly-cisPro motif, important for rejection of L-amino acids motif.

This sequence belongs to the DTD family. In terms of assembly, homodimer.

It is found in the cytoplasm. It carries out the reaction glycyl-tRNA(Ala) + H2O = tRNA(Ala) + glycine + H(+). It catalyses the reaction a D-aminoacyl-tRNA + H2O = a tRNA + a D-alpha-amino acid + H(+). In terms of biological role, an aminoacyl-tRNA editing enzyme that deacylates mischarged D-aminoacyl-tRNAs. Also deacylates mischarged glycyl-tRNA(Ala), protecting cells against glycine mischarging by AlaRS. Acts via tRNA-based rather than protein-based catalysis; rejects L-amino acids rather than detecting D-amino acids in the active site. By recycling D-aminoacyl-tRNA to D-amino acids and free tRNA molecules, this enzyme counteracts the toxicity associated with the formation of D-aminoacyl-tRNA entities in vivo and helps enforce protein L-homochirality. The polypeptide is D-aminoacyl-tRNA deacylase (Pseudoalteromonas atlantica (strain T6c / ATCC BAA-1087)).